Reading from the N-terminus, the 97-residue chain is Large ribosomal subunit protein uL23 (97 aa).

This sequence belongs to the universal ribosomal protein uL23 family. Part of the 50S ribosomal subunit. Contacts protein L29, and trigger factor when it is bound to the ribosome.

Its function is as follows. One of the early assembly proteins it binds 23S rRNA. One of the proteins that surrounds the polypeptide exit tunnel on the outside of the ribosome. Forms the main docking site for trigger factor binding to the ribosome. The sequence is that of Large ribosomal subunit protein uL23 from Anaeromyxobacter dehalogenans (strain 2CP-C).